Reading from the N-terminus, the 389-residue chain is Mannitol-1-phosphate 5-dehydrogenase (389 aa).

5-16 (AVHFGAGNIGRG) provides a ligand contact to NAD(+). Lysine 215 is a catalytic residue.

It belongs to the mannitol dehydrogenase family. As to quaternary structure, monomer.

The catalysed reaction is D-mannitol 1-phosphate + NAD(+) = beta-D-fructose 6-phosphate + NADH + H(+). In terms of biological role, catalyzes the NAD(H)-dependent interconversion of D-fructose 6-phosphate and D-mannitol 1-phosphate in the mannitol metabolic pathway. In Sclerotinia sclerotiorum (strain ATCC 18683 / 1980 / Ss-1) (White mold), this protein is Mannitol-1-phosphate 5-dehydrogenase.